A 93-amino-acid chain; its full sequence is Putative pterin-4-alpha-carbinolamine dehydratase (93 aa).

It belongs to the pterin-4-alpha-carbinolamine dehydratase family.

The enzyme catalyses (4aS,6R)-4a-hydroxy-L-erythro-5,6,7,8-tetrahydrobiopterin = (6R)-L-erythro-6,7-dihydrobiopterin + H2O. This is Putative pterin-4-alpha-carbinolamine dehydratase from Trichormus variabilis (strain ATCC 29413 / PCC 7937) (Anabaena variabilis).